The chain runs to 642 residues: Capsid vertex component 2 (642 aa).

An interaction with major capsid protein/MCP region spans residues 1-48 (MSLLHTFWRLPVAVFFEPHEENVLRCPERVLRRLLEDAAVTMRGGGWR). A disordered region spans residues 97–125 (DEGPSPRTLLQPPCRPRSSSPGTGVAGAS).

It belongs to the herpesviridae CVC2 protein family. As to quaternary structure, heterodimerizes with CVC1. Interacts with major capsid protein/MCP and triplex capsid protein 1/TRX1 at the pentamer vertices. Interacts with the large tegument protein/LTP.

The protein resides in the virion. Its subcellular location is the host nucleus. Functionally, capsid vertex-specific component that plays a role during viral DNA encapsidation, assuring correct genome cleavage and presumably stabilizing capsids that contain full-length viral genomes. Participates in the interaction between the capsid and the tegument through interaction with the large tegument protein/LTP. The polypeptide is Capsid vertex component 2 (Homo sapiens (Human)).